A 127-amino-acid polypeptide reads, in one-letter code: Tyrosine-protein phosphatase 2 (127 aa).

The 127-residue stretch at glutamine 1–valine 127 folds into the Tyrosine-protein phosphatase domain. Residues valine 63–proline 81 show a composition bias toward acidic residues. Residues valine 63–glutamate 82 form a disordered region.

Belongs to the protein-tyrosine phosphatase family.

The enzyme catalyses O-phospho-L-tyrosyl-[protein] + H2O = L-tyrosyl-[protein] + phosphate. The chain is Tyrosine-protein phosphatase 2 (STY-2) from Styela plicata (Wrinkled sea squirt).